Reading from the N-terminus, the 883-residue chain is Alanine--tRNA ligase (883 aa).

Positions 563, 567, 677, and 681 each coordinate Zn(2+).

The protein belongs to the class-II aminoacyl-tRNA synthetase family. Zn(2+) serves as cofactor.

Its subcellular location is the cytoplasm. It catalyses the reaction tRNA(Ala) + L-alanine + ATP = L-alanyl-tRNA(Ala) + AMP + diphosphate. Catalyzes the attachment of alanine to tRNA(Ala) in a two-step reaction: alanine is first activated by ATP to form Ala-AMP and then transferred to the acceptor end of tRNA(Ala). Also edits incorrectly charged Ser-tRNA(Ala) and Gly-tRNA(Ala) via its editing domain. This is Alanine--tRNA ligase from Cereibacter sphaeroides (strain ATCC 17029 / ATH 2.4.9) (Rhodobacter sphaeroides).